We begin with the raw amino-acid sequence, 1486 residues long: MAYSWQTDPNPNESHEKQYEHQEFLFVNQPHSSSQVSLGFDQIVDEISGKIPHYESEIDENTFFVPTAPKWDSTGHSLNEAHQISLNEFTSKSRELSWHQVSKAPAIGFSPSVLPKPQNTNKECSWGSPIGKHHGADDSRFSILAPSFTSLDKINLEKELENENHNYHIGFESSIPPTNSSFSSDFMPKEENKRSGHVNIVEPSLMLLKGSLQPGMWESTWQKNIESIGCSIQLVEVPQSSNTSLASFCNKVKKIRERYHAADVNFNSGKIWSTTTAFPYQLFSKTKFNIHIFIDNSTQPLHFMPCANYLVKDLIAEILHFCTNDQLLPKDHILSVCGSEEFLQNDHCLGSHKMFQKDKSVIQLHLQKSREAPGKLSRKHEEDHSQFYLNQLLEFMHIWKVSRQCLLTLIRKYDFHLKYLLKTQENVYNIIEEVKKICSVLGCVETKQITDAVNELSLILQRKGENFYQSSETSAKGLIEKVTTELSTSIYQLINVYCNSFYADFQPVNVPRCTSYLNPGLPSHLSFTVYAAHNIPETWVHSYKAFSFTCWLTYAGKKLCQVRNYRNIPDKKLFFFLVNWNETINFPLEIKSLPRESMLTVKLFGIACATNNANLLAWTCLPLFPKEKSILGSMLFSMTLQSEPPVEMITPGVWDVSQPSPVTLQIDFPATGWEYMKPDSEENRSNLEEPLKECIKHIARLSQKQTPLLLSEEKKRYLWFYRFYCNNENCSLPLVLGSAPGWDERTVSEMHTILRRWTFSQPLEALGLLTSSFPDQEIRKVAVQQLDNLLNDELLEYLPQLVQAVKFEWNLESPLVQLLLHRSLQSIQVAHRLYWLLKNAENEAYFKSWYQKLLAALQFCAGKALNDEFSKEQKLIKILGDIGERVKSASDHQRQEVLKKEIGRLEEFFQDVNTCHLPLNPALCIKGIDHDACSYFTSNALPLKITFINANPMGKNISIIFKAGDDLRQDMLVLQLIQVMDNIWLQEGLDMQMIIYRCLSTGKDQGLVQMVPDAVTLAKIHRHSGLIGPLKENTIKKWFSQHNHLKADYEKALRNFFYSCAGWCVVTFILGVCDRHNDNIMLTKSGHMFHIDFGKFLGHAQTFGGIKRDRAPFIFTSEMEYFITEGGKNPQHFQDFVELCCRAYNIIRKHSQLLLNLLEMMLYAGLPELSGIQDLKYVYNNLRPQDTDLEATSHFTKKIKESLECFPVKLNNLIHTLAQMSAISPAKSTSQTFPQESCLLSTTRSIERATILGFSKKSSNLYLIQVTHSNNETSLTEKSFEQFSKLHSQLQKQFASLTLPEFPHWWHLPFTNSDHRRFRDLNHYMEQILNVSHEVTNSDCVLSFFLSEAVQQTVEESSPVYLGEKFPDKKPKVQLVISYEDVKLTILVKHMKNIHLPDGSAPSAHVEFYLLPYPSEVRRRKTKSVPKCTDPTYNEIVVYDEVTELQGHVLMLIVKSKTVFVGAINIRLCSVPLDKEKWYPLGNSII.

A PI3K-RBD domain is found at 285 to 371 (KTKFNIHIFI…IQLHLQKSRE (87 aa)). Positions 521–669 (LPSHLSFTVY…SPVTLQIDFP (149 aa)) constitute a C2 PI3K-type domain. In terms of domain architecture, PIK helical spans 684–860 (RSNLEEPLKE…QKLLAALQFC (177 aa)). The region spanning 929 to 1207 (DHDACSYFTS…KIKESLECFP (279 aa)) is the PI3K/PI4K catalytic domain. The G-loop stretch occupies residues 935–941 (YFTSNAL). The tract at residues 1071 to 1079 (GVCDRHNDN) is catalytic loop. Residues 1090-1116 (HIDFGKFLGHAQTFGGIKRDRAPFIFT) are activation loop. One can recognise a PX domain in the interval 1240-1352 (LSTTRSIERA…SFFLSEAVQQ (113 aa)). Residues 1369–1486 (KKPKVQLVIS…KWYPLGNSII (118 aa)) enclose the C2 domain.

This sequence belongs to the PI3/PI4-kinase family. As to expression, highly expressed in liver, prostate and testis. Lower levels in small intestine, kidney and pancreas.

The protein resides in the membrane. The enzyme catalyses a 1,2-diacyl-sn-glycero-3-phospho-(1D-myo-inositol 4-phosphate) + ATP = a 1,2-diacyl-sn-glycero-3-phospho-(1D-myo-inositol-3,4-bisphosphate) + ADP + H(+). The catalysed reaction is a 1,2-diacyl-sn-glycero-3-phospho-(1D-myo-inositol) + ATP = a 1,2-diacyl-sn-glycero-3-phospho-(1D-myo-inositol-3-phosphate) + ADP + H(+). In terms of biological role, generates phosphatidylinositol 3-phosphate (PtdIns3P) and phosphatidylinositol 3,4-bisphosphate (PtdIns(3,4)P2) that act as second messengers. May play a role in SDF1A-stimulated chemotaxis. The polypeptide is Phosphatidylinositol 3-kinase C2 domain-containing subunit gamma (PIK3C2G) (Homo sapiens (Human)).